Here is a 544-residue protein sequence, read N- to C-terminus: Chaperonin GroEL (544 aa).

ATP is bound by residues 29–32 (TMGP), Lys50, 86–90 (DGTTT), Gly414, 477–479 (NAA), and Asp493. The tract at residues 525 to 544 (DKPAMPSMPDMGGMGMPGMM) is disordered.

The protein belongs to the chaperonin (HSP60) family. As to quaternary structure, forms a cylinder of 14 subunits composed of two heptameric rings stacked back-to-back. Interacts with the co-chaperonin GroES.

It localises to the cytoplasm. The catalysed reaction is ATP + H2O + a folded polypeptide = ADP + phosphate + an unfolded polypeptide.. Functionally, together with its co-chaperonin GroES, plays an essential role in assisting protein folding. The GroEL-GroES system forms a nano-cage that allows encapsulation of the non-native substrate proteins and provides a physical environment optimized to promote and accelerate protein folding. The polypeptide is Chaperonin GroEL (Aliarcobacter butzleri (strain RM4018) (Arcobacter butzleri)).